Consider the following 1382-residue polypeptide: ABC-type transporter atr1 (1382 aa).

Over residues 1–12 (MRFRSDSRADHQ) the composition is skewed to basic and acidic residues. The disordered stretch occupies residues 1 to 56 (MRFRSDSRADHQHPKKQGSMDPDTIQALKYQDRSSSSSSNNKPKEKVGSASTSPSP). N-linked (GlcNAc...) asparagine glycosylation is present at N62. 6 helical membrane passes run 101-121 (LFGTGMAIAAGAAQPLMNIFI), 159-179 (LILLYLGIGMFFASMLYMAVF), 233-253 (LPMAIMYFSTFVTAAAVAFAF), 259-279 (LVLLPIAPLILLAGGVMGALT), 339-359 (GVGVGALLFIIYAGYALAFFY), and 374-394 (IVSVVFANFAGAFAIANLFSM). Residues 101 to 400 (LFGTGMAIAA…LFSMIENFTM (300 aa)) enclose the ABC transmembrane type-1 1 domain. Residue N397 is glycosylated (N-linked (GlcNAc...) asparagine). An ABC transporter 1 domain is found at 445-688 (LKLDHVHFAY…PNGTFASMLR (244 aa)). Residue 480 to 487 (GLSGSGKS) participates in ATP binding. Residue N680 is glycosylated (N-linked (GlcNAc...) asparagine). Residues 738–768 (SVKPKDPSKNFEPPGESYASPAADGVKQDAP) form a disordered region. In terms of domain architecture, ABC transmembrane type-1 2 spans 797-1094 (LGSLCAAIIG…IFNYSADFSS (298 aa)). A helical transmembrane segment spans residues 800-820 (LCAAIIGAVYPVYAILFGTAI). N827 is a glycosylation site (N-linked (GlcNAc...) asparagine). Residues 848–868 (ISSGSFFIVAVGCAFISFYHV) form a helical membrane-spanning segment. An N-linked (GlcNAc...) asparagine glycan is attached at N903. The next 2 membrane-spanning stretches (helical) occupy residues 911 to 931 (SLSVLSQGIYGGVGPTLGSIV) and 951 to 973 (LALVVIASTPLTITAGLLRLRVL). The N-linked (GlcNAc...) asparagine glycan is linked to N1020. 2 consecutive transmembrane segments (helical) span residues 1034-1054 (VLFGLSQCVQLLVTALAFWYG) and 1067-1087 (GFFTILISVVYGSVQAGNIFN). Residues 1136–1377 (IALKEVTFRY…DGLFALMARL (242 aa)) enclose the ABC transporter 2 domain. 1171-1178 (GGSGSGKS) lines the ATP pocket. N-linked (GlcNAc...) asparagine glycosylation occurs at N1324.

The protein belongs to the ABC transporter superfamily. ABCB family. Multidrug resistance exporter (TC 3.A.1.201) subfamily.

Its subcellular location is the cell membrane. ABC-type transporter; part of the gene cluster that mediates the biosynthesis of the glycolipid biosurfactant ustilagic acid (UA). UA is a secreted cellobiose glycolipid that is toxic for many microorganisms and confers biocontrol activity to U.maydis. Export of UA is presumably catalyzed by the ABC transporter atr1. Atr1 appears to be quite unspecific, as many of the UA derivatives produced by cluster mutant strains are readily exported. In Mycosarcoma maydis (Corn smut fungus), this protein is ABC-type transporter atr1.